We begin with the raw amino-acid sequence, 274 residues long: Large ribosomal subunit protein uL2 (274 aa).

The interval 223-256 (VVMNPVDHPHGGGEGKTGEGRHPVDPWGNLTKGY) is disordered. The span at 229–246 (DHPHGGGEGKTGEGRHPV) shows a compositional bias: basic and acidic residues.

Belongs to the universal ribosomal protein uL2 family. As to quaternary structure, part of the 50S ribosomal subunit. Forms a bridge to the 30S subunit in the 70S ribosome.

Its function is as follows. One of the primary rRNA binding proteins. Required for association of the 30S and 50S subunits to form the 70S ribosome, for tRNA binding and peptide bond formation. It has been suggested to have peptidyltransferase activity; this is somewhat controversial. Makes several contacts with the 16S rRNA in the 70S ribosome. The sequence is that of Large ribosomal subunit protein uL2 from Albidiferax ferrireducens (strain ATCC BAA-621 / DSM 15236 / T118) (Rhodoferax ferrireducens).